The chain runs to 242 residues: Small ribosomal subunit protein uS2 (242 aa).

The protein belongs to the universal ribosomal protein uS2 family.

The sequence is that of Small ribosomal subunit protein uS2 from Aeromonas salmonicida (strain A449).